Here is a 332-residue protein sequence, read N- to C-terminus: MAKVYHDTEVSLEALKDKIVTIIGYGSQGRAHALNLRDSGIKVIVAVRPNGESWKRALEEGMTVEKIEDAVQKSDVLMFLIPDTEQPTIYKEKVLPYLRPNQALGFAHGFNIHFSQIVPPPFLDVFMVAPKGPGPLVRDLYVEGKGVPALFAVYQDYTQKCRDIALAYAKGIGATRAGVLETTFKEETETDLFGEQVVLCGGVTALIKAGFETLVEAGYQPEVAYYECLHEMKLIVDLINQGGISFMRKAISDTAKYGDITRGPRIVNEETKKEMRKILNEIQSGQFAKEWILENQVGRPVFNALLKKDEDHLIEKVGKVLREMMPWLKPKK.

One can recognise a KARI N-terminal Rossmann domain in the interval 2–182; sequence AKVYHDTEVS…GATRAGVLET (181 aa). NADP(+) contacts are provided by residues 25–28, Arg-48, Ser-53, and 83–86; these read YGSQ and DTEQ. The active site involves His-108. Gly-134 contacts NADP(+). Residues 183–328 form the KARI C-terminal knotted domain; it reads TFKEETETDL…KVLREMMPWL (146 aa). Asp-191, Glu-195, Glu-227, and Glu-231 together coordinate Mg(2+). Substrate is bound at residue Ser-252.

The protein belongs to the ketol-acid reductoisomerase family. It depends on Mg(2+) as a cofactor.

The catalysed reaction is (2R)-2,3-dihydroxy-3-methylbutanoate + NADP(+) = (2S)-2-acetolactate + NADPH + H(+). The enzyme catalyses (2R,3R)-2,3-dihydroxy-3-methylpentanoate + NADP(+) = (S)-2-ethyl-2-hydroxy-3-oxobutanoate + NADPH + H(+). Its pathway is amino-acid biosynthesis; L-isoleucine biosynthesis; L-isoleucine from 2-oxobutanoate: step 2/4. It participates in amino-acid biosynthesis; L-valine biosynthesis; L-valine from pyruvate: step 2/4. Its function is as follows. Involved in the biosynthesis of branched-chain amino acids (BCAA). Catalyzes an alkyl-migration followed by a ketol-acid reduction of (S)-2-acetolactate (S2AL) to yield (R)-2,3-dihydroxy-isovalerate. In the isomerase reaction, S2AL is rearranged via a Mg-dependent methyl migration to produce 3-hydroxy-3-methyl-2-ketobutyrate (HMKB). In the reductase reaction, this 2-ketoacid undergoes a metal-dependent reduction by NADPH to yield (R)-2,3-dihydroxy-isovalerate. This Dictyoglomus turgidum (strain DSM 6724 / Z-1310) protein is Ketol-acid reductoisomerase (NADP(+)).